A 305-amino-acid polypeptide reads, in one-letter code: HTH-type transcriptional activator BauR (305 aa).

Positions 15–72 (FDIRLLRIFKTIVECGSFSAAESTLGLSRSAISLHMGDLEKRLGMRLCQRGRAGFALT) constitute an HTH lysR-type domain.

The protein belongs to the LysR transcriptional regulatory family.

Involved in the degradation of beta-alanine. BauR activates the transcription of the bauABCD operon. The chain is HTH-type transcriptional activator BauR (bauR) from Pseudomonas aeruginosa (strain ATCC 15692 / DSM 22644 / CIP 104116 / JCM 14847 / LMG 12228 / 1C / PRS 101 / PAO1).